The chain runs to 338 residues: MTTLRLLISDSYDPWFNLAVEECIFRQMPATQRVLFLWRNADTVVIGRAQNPWKECNTRRMEEDNVRLARRSSGGGAVFHDLGNTCFTFMAGKPEYDKTISTHIVLAALNSLGVMADASGRNDLVVKTPDGDRKVSGSAYRETKDRGFHHGTLLLNADLSRLANYLNPDKKKLAAKGITSVRSRVANLTELLPGITHEQVCQAVTEAFFAHYGERVDAEVISPNKTPDLPNFAETFARQSSWEWNFGQAPAFSHLLDEHFTWGGVELHFDVEKGVITRAQVFTDSLNPAPLEALAGRLQGCQYRADVLEQACESLIAEFPAQKGELRELAAWMAQAVR.

The BPL/LPL catalytic domain occupies 29 to 216 (PATQRVLFLW…AFFAHYGERV (188 aa)). ATP-binding positions include R71, 76–79 (GAVF), and K134. K134 lines the (R)-lipoate pocket.

Belongs to the LplA family. Monomer.

It localises to the cytoplasm. The enzyme catalyses L-lysyl-[lipoyl-carrier protein] + (R)-lipoate + ATP = N(6)-[(R)-lipoyl]-L-lysyl-[lipoyl-carrier protein] + AMP + diphosphate + H(+). The protein operates within protein modification; protein lipoylation via exogenous pathway; protein N(6)-(lipoyl)lysine from lipoate: step 1/2. It functions in the pathway protein modification; protein lipoylation via exogenous pathway; protein N(6)-(lipoyl)lysine from lipoate: step 2/2. In terms of biological role, catalyzes both the ATP-dependent activation of exogenously supplied lipoate to lipoyl-AMP and the transfer of the activated lipoyl onto the lipoyl domains of lipoate-dependent enzymes. The polypeptide is Lipoate-protein ligase A (Salmonella paratyphi C (strain RKS4594)).